We begin with the raw amino-acid sequence, 882 residues long: DNA mismatch repair protein MutS (882 aa).

627–634 (GPNMAGKS) is an ATP binding site.

Belongs to the DNA mismatch repair MutS family.

This protein is involved in the repair of mismatches in DNA. It is possible that it carries out the mismatch recognition step. This protein has a weak ATPase activity. In Anaeromyxobacter dehalogenans (strain 2CP-1 / ATCC BAA-258), this protein is DNA mismatch repair protein MutS.